The following is a 338-amino-acid chain: Tetraacyldisaccharide 4'-kinase (338 aa).

Position 53-60 (53-60 (VAGGAGKT)) interacts with ATP.

Belongs to the LpxK family.

It carries out the reaction a lipid A disaccharide + ATP = a lipid IVA + ADP + H(+). Its pathway is glycolipid biosynthesis; lipid IV(A) biosynthesis; lipid IV(A) from (3R)-3-hydroxytetradecanoyl-[acyl-carrier-protein] and UDP-N-acetyl-alpha-D-glucosamine: step 6/6. Transfers the gamma-phosphate of ATP to the 4'-position of a tetraacyldisaccharide 1-phosphate intermediate (termed DS-1-P) to form tetraacyldisaccharide 1,4'-bis-phosphate (lipid IVA). In Polaromonas sp. (strain JS666 / ATCC BAA-500), this protein is Tetraacyldisaccharide 4'-kinase.